Consider the following 331-residue polypeptide: Type 2 lactosamine alpha-2,3-sialyltransferase (331 aa).

Over 1–4 (MRGY) the chain is Cytoplasmic. Residues 5 to 25 (LVAIFLSAVFLYYVLHCILWG) traverse the membrane as a helical; Signal-anchor for type II membrane protein segment. The Lumenal portion of the chain corresponds to 26–331 (TNVYWAAPVE…KNLVINLTQD (306 aa)). N-linked (GlcNAc...) asparagine glycans are attached at residues Asn-129, Asn-181, Asn-282, Asn-295, Asn-308, and Asn-327.

The protein belongs to the glycosyltransferase 29 family.

The protein resides in the golgi apparatus membrane. It catalyses the reaction a neolactoside nLc4Cer(d18:1(4E)) + CMP-N-acetyl-beta-neuraminate = a neolactoside IV(3)-alpha-NeuAc-nLc4Cer(d18:1(4E)) + CMP + H(+). The catalysed reaction is a beta-D-galactosyl-(1-&gt;4)-N-acetyl-beta-D-glucosaminyl derivative + CMP-N-acetyl-beta-neuraminate = an N-acetyl-alpha-neuraminyl-(2-&gt;3)-beta-D-galactosyl-(1-&gt;4)-N-acetyl-beta-D-glucosaminyl derivative + CMP + H(+). It carries out the reaction a neolactoside nLc6Cer(d18:1(4E)) + CMP-N-acetyl-beta-neuraminate = a neolactoside VI(3)-alpha-NeuNAc-nLc6Cer(d18:1(4E)) + CMP + H(+). Its function is as follows. Transfers the sialyl residue from CMP-N-acetyl-beta-neuraminate to the terminal galactose residue on sugar chains of glycoproteins and glycolipids. It's alpha-2,3-sialyltransferase activity is specific toward type II glycan chains (Galbeta1-4GlcNAc) on glycoproteins and glycolipids such as neolactosides nLc4Cer and nLc6Cer, whose sialyl-products serve as precursors for the Lewis X antigen. Critically involved in the synthesis of functional selectin ligands needed for neutrophil recruitment during inflammation and lymphocyte homing to the lymph nodes. This chain is Type 2 lactosamine alpha-2,3-sialyltransferase (ST3GAL6), found in Pongo abelii (Sumatran orangutan).